We begin with the raw amino-acid sequence, 180 residues long: Putative adenylate kinase (180 aa).

The ATP site is built by G10, G12, K13, T14, and T15. The tract at residues 30–50 is NMP; that stretch reads SVKELALSRGIGERVSDEIEI. The tract at residues 99-109 is LID; that stretch reads ARGYSKKKLAE. ATP-binding residues include R100 and K138.

Belongs to the adenylate kinase family. AK6 subfamily. As to quaternary structure, interacts with uS11. Not a structural component of 40S pre-ribosomes, but transiently interacts with them by binding to uS11.

The enzyme catalyses AMP + ATP = 2 ADP. It carries out the reaction ATP + H2O = ADP + phosphate + H(+). Broad-specificity nucleoside monophosphate (NMP) kinase that catalyzes the reversible transfer of the terminal phosphate group between nucleoside triphosphates and monophosphates. Also has ATPase activity. Involved in the late maturation steps of the 30S ribosomal particles, specifically 16S rRNA maturation. While NMP activity is not required for ribosome maturation, ATPase activity is. Associates transiently with small ribosomal subunit protein uS11. ATP hydrolysis breaks the interaction with uS11. May temporarily remove uS11 from the ribosome to enable a conformational change of the ribosomal RNA that is needed for the final maturation step of the small ribosomal subunit. The chain is Putative adenylate kinase from Thermococcus onnurineus (strain NA1).